We begin with the raw amino-acid sequence, 54 residues long: UPF0181 protein APJL_0874 (54 aa).

It belongs to the UPF0181 family.

In Actinobacillus pleuropneumoniae serotype 3 (strain JL03), this protein is UPF0181 protein APJL_0874.